Consider the following 590-residue polypeptide: MAPAVFATLNEPSYQEQCGAVFMRKFTNQSVTENTNNLPLFNPNPNPNFERSNSSKQCDDSSEFGSYATFNLAGYTSSQLRELKKRFTSELKQIRILRERIESGTFETQQGYTIPEVPAVRSAPLNNFTGEKNDLGPKKKKQKKNVSGLKRSNQFGPSDPESEKLLAGMLNTCSQILVKLMKHKWAWVFNTPVDVVGLGLHDYHQVVKKPMDLGTVKLNLDKGFYVSPIDFATDVRLTFDNAMTYNPKGQDVYFMADKLLDHFDGMFNPAFKKFEAQQLKLTGSSSRPEPDFKPDFKQRQWNQNPPMVANPRKGTEQISIAKKLDSVKPPQPTLPPQLVEPSRVQSPSPPPPPPVIQPELPQPQPPPPQLEIEVEAPPDVSEVSKGRKGKLPKPKAKDPNKRLMTMEEKSKLGMNLQDLPPEKLGQLLQILRKRNGHLAQDGDEIELDIEAVDNETLWELDRFVTNYKKMASKIKRQGFIRNVSTPPRNMASVAEMGSAEKRTRRGDAGEEDVDIGEDIPIEDYPSVEIERDGTAVAAAASSGSSSSGSSSSSGGSSSSSDSGSGGSSSGSDSDADSVQSPFVEAKEAQC.

The segment at 125–160 (LNNFTGEKNDLGPKKKKQKKNVSGLKRSNQFGPSDP) is disordered. The Bromo domain maps to 164–270 (KLLAGMLNTC…DHFDGMFNPA (107 aa)). Disordered regions lie at residues 282–400 (TGSS…KDPN) and 476–590 (RQGF…EAQC). Residues 288 to 298 (PEPDFKPDFKQ) show a composition bias toward basic and acidic residues. Residues 347–369 (PSPPPPPPVIQPELPQPQPPPPQ) are compositionally biased toward pro residues. Residues 394 to 475 (PKAKDPNKRL…NYKKMASKIK (82 aa)) form the NET domain. Over residues 498–508 (SAEKRTRRGDA) the composition is skewed to basic and acidic residues. Residues 509–521 (GEEDVDIGEDIPI) are compositionally biased toward acidic residues. The segment covering 537–562 (AAAASSGSSSSGSSSSSGGSSSSSDS) has biased composition (low complexity).

The protein localises to the nucleus. This is Transcription factor GTE7 (GTE7) from Arabidopsis thaliana (Mouse-ear cress).